A 504-amino-acid polypeptide reads, in one-letter code: Ribose import ATP-binding protein RbsA 3 (504 aa).

2 consecutive ABC transporter domains span residues 6–238 and 251–494; these read ANLK…VGRP and IGAE…MMGG. An ATP-binding site is contributed by 38-45; the sequence is GENGAGKS.

It belongs to the ABC transporter superfamily. Ribose importer (TC 3.A.1.2.1) family. In terms of assembly, the complex is composed of an ATP-binding protein (RbsA), two transmembrane proteins (RbsC) and a solute-binding protein (RbsB).

Its subcellular location is the cell inner membrane. It catalyses the reaction D-ribose(out) + ATP + H2O = D-ribose(in) + ADP + phosphate + H(+). Its function is as follows. Part of the ABC transporter complex RbsABC involved in ribose import. Responsible for energy coupling to the transport system. This Rhizobium meliloti (strain 1021) (Ensifer meliloti) protein is Ribose import ATP-binding protein RbsA 3.